We begin with the raw amino-acid sequence, 64 residues long: Large ribosomal subunit protein bL35 (64 aa).

The segment covering 1–22 (MPKMKSHTGMGKRVRVTGKGKI) has biased composition (basic residues). Residues 1–28 (MPKMKSHTGMGKRVRVTGKGKIVKQQAG) form a disordered region.

It belongs to the bacterial ribosomal protein bL35 family.

The chain is Large ribosomal subunit protein bL35 from Salinispora tropica (strain ATCC BAA-916 / DSM 44818 / JCM 13857 / NBRC 105044 / CNB-440).